The sequence spans 1026 residues: Leucine-rich repeat and coiled-coil domain-containing protein 1 (1026 aa).

LRR repeat units follow at residues 39–60 (SIHA…DHIW), 61–82 (NLRH…NTLT), 83–104 (KLCT…EALV), 105–126 (NLTK…MPLH), and 131–152 (KLRY…LQCT). Residues 170 to 212 (NPICLIPGYRAIILQTLPQLRILDCKNIFGEPVSLEEINSSHL) enclose the LRRCT domain. The segment at 310–338 (DNVPEKDLRPKRDTDITSESDYGNRRECS) is disordered. A compositionally biased stretch (basic and acidic residues) spans 312 to 324 (VPEKDLRPKRDTD). Residues 428 to 641 (REMRWKAEQT…DLENEFRIAL (214 aa)) are a coiled coil.

This sequence belongs to the LRRCC1 family.

The protein resides in the cytoplasm. It is found in the cytoskeleton. It localises to the microtubule organizing center. Its subcellular location is the centrosome. The protein localises to the centriole. In terms of biological role, required for the organization of the mitotic spindle. Maintains the structural integrity of centrosomes during mitosis. The chain is Leucine-rich repeat and coiled-coil domain-containing protein 1 (Lrrcc1) from Mus musculus (Mouse).